A 229-amino-acid polypeptide reads, in one-letter code: MKRKNIALIPAAGIGVRFGADKPKQYVEIGSKTVLEHVLGIFERHEAVDLTVVVVSPEDTFADKVQTAFPQVRVWKNGGQTRAETVRNGVAKLLETGLAAETDNILVHDAARCCLPSEALARLIEQAGNAAEGGILAVPVADTLKRAESGQISATVDRSGLWQAQTPQLFQAGLLHRALAAENLGGITDEASAVEKLGVRPLLIQGDARNLKLTQPQDAYIVRLLLNAV.

This sequence belongs to the IspD/TarI cytidylyltransferase family. IspD subfamily.

The enzyme catalyses 2-C-methyl-D-erythritol 4-phosphate + CTP + H(+) = 4-CDP-2-C-methyl-D-erythritol + diphosphate. It participates in isoprenoid biosynthesis; isopentenyl diphosphate biosynthesis via DXP pathway; isopentenyl diphosphate from 1-deoxy-D-xylulose 5-phosphate: step 2/6. Its function is as follows. Catalyzes the formation of 4-diphosphocytidyl-2-C-methyl-D-erythritol from CTP and 2-C-methyl-D-erythritol 4-phosphate (MEP). This Neisseria gonorrhoeae (strain ATCC 700825 / FA 1090) protein is 2-C-methyl-D-erythritol 4-phosphate cytidylyltransferase.